The sequence spans 100 residues: Large ribosomal subunit protein eL36A (100 aa).

At Thr2 the chain carries N-acetylthreonine.

It belongs to the eukaryotic ribosomal protein eL36 family. Component of the large ribosomal subunit (LSU). Mature yeast ribosomes consist of a small (40S) and a large (60S) subunit. The 40S small subunit contains 1 molecule of ribosomal RNA (18S rRNA) and 33 different proteins (encoded by 57 genes). The large 60S subunit contains 3 rRNA molecules (25S, 5.8S and 5S rRNA) and 46 different proteins (encoded by 81 genes). N-terminally acetylated by acetyltransferase NatA.

The protein localises to the cytoplasm. Its function is as follows. Component of the ribosome, a large ribonucleoprotein complex responsible for the synthesis of proteins in the cell. The small ribosomal subunit (SSU) binds messenger RNAs (mRNAs) and translates the encoded message by selecting cognate aminoacyl-transfer RNA (tRNA) molecules. The large subunit (LSU) contains the ribosomal catalytic site termed the peptidyl transferase center (PTC), which catalyzes the formation of peptide bonds, thereby polymerizing the amino acids delivered by tRNAs into a polypeptide chain. The nascent polypeptides leave the ribosome through a tunnel in the LSU and interact with protein factors that function in enzymatic processing, targeting, and the membrane insertion of nascent chains at the exit of the ribosomal tunnel. This chain is Large ribosomal subunit protein eL36A, found in Saccharomyces cerevisiae (strain ATCC 204508 / S288c) (Baker's yeast).